We begin with the raw amino-acid sequence, 234 residues long: N-(5'-phosphoribosyl)anthranilate isomerase 1 (234 aa).

It belongs to the TrpF family.

It carries out the reaction N-(5-phospho-beta-D-ribosyl)anthranilate = 1-(2-carboxyphenylamino)-1-deoxy-D-ribulose 5-phosphate. It participates in amino-acid biosynthesis; L-tryptophan biosynthesis; L-tryptophan from chorismate: step 3/5. The polypeptide is N-(5'-phosphoribosyl)anthranilate isomerase 1 (trpF1) (Methanosarcina mazei (strain ATCC BAA-159 / DSM 3647 / Goe1 / Go1 / JCM 11833 / OCM 88) (Methanosarcina frisia)).